The sequence spans 633 residues: Micronuclear linker histone polyprotein (633 aa).

2 DNA-binding regions (HMG box) span residues P12–Y74 and P96–N164. Residues A170 to Q633 form a disordered region. Residues K174–S190 show a composition bias toward basic residues. Low complexity-rich tracts occupy residues S212–S224 and N253–S271. Composition is skewed to basic residues over residues K272–S309 and S330–S352. Composition is skewed to basic and acidic residues over residues K353 to K374 and A382 to T401. The segment covering N406–G416 has biased composition (low complexity). A compositionally biased stretch (basic residues) spans S417–S444. Residues P446–S469 are compositionally biased toward polar residues. Over residues R478 to N491 the composition is skewed to basic and acidic residues. Residues S496–K524 show a composition bias toward basic residues. Basic and acidic residues-rich tracts occupy residues S540 to A550 and E559 to K612.

In terms of processing, all four histones are processed from the precursor molecule. Phosphorylated in growing and dividing cells but not in nongrowing (starved) cells. Post-translationally, the N-terminus of MIC LH-alpha and MIC LH-delta is blocked.

It is found in the nucleus. Its subcellular location is the chromosome. This is Micronuclear linker histone polyprotein (MLH) from Tetrahymena thermophila (strain SB210).